Reading from the N-terminus, the 740-residue chain is Probable type IV piliation system protein DR_0774 (740 aa).

Residues 1-20 (MNKRHALLLTAVLGMATAYA) form the signal peptide.

The protein belongs to the bacterial secretin family.

The protein localises to the cell envelope. In terms of biological role, could be part of the type IV piliation system (T4P). May contribute at the cohesion between the S-layer and the outer membrane by forming oligomers. Could also be the main channel through which trafficking is managed. This chain is Probable type IV piliation system protein DR_0774, found in Deinococcus radiodurans (strain ATCC 13939 / DSM 20539 / JCM 16871 / CCUG 27074 / LMG 4051 / NBRC 15346 / NCIMB 9279 / VKM B-1422 / R1).